A 397-amino-acid chain; its full sequence is Lysophospholipid transporter LplT (397 aa).

The Periplasmic portion of the chain corresponds to 1 to 17; it reads MSESVHTNTSLWSKGMK. The chain crosses the membrane as a helical span at residues 18 to 38; that stretch reads AVIVAQFLSAFGDNALLFATL. At 39 to 52 the chain is on the cytoplasmic side; it reads ALLKAQFYPEWSQP. Residues 53 to 73 traverse the membrane as a helical segment; sequence ILQMVFVGAYILFAPFVGQVA. At 74–90 the chain is on the periplasmic side; sequence DSFAKGRVMMFANGLKL. The helical transmembrane segment at 91 to 111 threads the bilayer; sequence LGAASICFGINPFLGYTLVGV. Topologically, residues 112–144 are cytoplasmic; the sequence is GAAAYSPAKYGILGELTTGSKLVKANGLMEAST. The helical transmembrane segment at 145–165 threads the bilayer; the sequence is IAAILLGSVAGGVLADWHILV. Alanine 166 is a topological domain (periplasmic). A helical transmembrane segment spans residues 167 to 187; sequence LVACALAYGGAVVANIYIPKL. At 188–226 the chain is on the cytoplasmic side; it reads AAARPGQSWNLISMTRSFLNACTSLWRNGETRFSLVGTS. Residues 227–247 traverse the membrane as a helical segment; it reads LFWGAGVTLRFLLVLWVPVAL. The Periplasmic segment spans residues 248–256; that stretch reads GITDNATPT. A helical membrane pass occupies residues 257-277; the sequence is YLNAMVAIGIVVGAGAAAKLV. The Cytoplasmic segment spans residues 278–280; that stretch reads TLE. A helical transmembrane segment spans residues 281–301; sequence TVSRCMPAGILIGVVVLIFSL. The Periplasmic segment spans residues 302–304; that stretch reads QHE. Residues 305 to 325 form a helical membrane-spanning segment; sequence LLPAYALLMLIGVLGGFFVVP. Topologically, residues 326 to 343 are cytoplasmic; that stretch reads LNALLQERGKKSVGAGNA. The chain crosses the membrane as a helical span at residues 344–364; it reads IAVQNLGENSAMLLMLGIYSL. Residues 365-366 lie on the Periplasmic side of the membrane; sequence AV. Residues 367 to 387 traverse the membrane as a helical segment; sequence MVGIPVVPIGIGFGALFALAI. At 388-397 the chain is on the cytoplasmic side; that stretch reads TALWIWQRRH.

The protein belongs to the major facilitator superfamily. LplT (TC 2.A.1.42) family.

The protein resides in the cell inner membrane. Its function is as follows. Catalyzes the facilitated diffusion of 2-acyl-glycero-3-phosphoethanolamine (2-acyl-GPE) into the cell. This chain is Lysophospholipid transporter LplT, found in Escherichia coli O81 (strain ED1a).